A 246-amino-acid chain; its full sequence is Adenosylcobinamide-GDP ribazoletransferase (246 aa).

A run of 6 helical transmembrane segments spans residues 37–57, 64–84, 100–122, 139–159, 185–205, and 223–243; these read FPAVGLVIGAAVAGAAWAGAL, ALAALIVWVGVTGALHLDGLA, LLAVLADPHVGSFGVVAIVLQLL, ALVLVPFAARIGPLVWTWWLM, LAAAAWFTPALLVTPLLVLWW, and AGIELIETGLLLSVAITGLWI.

This sequence belongs to the CobS family. The cofactor is Mg(2+).

It is found in the cell inner membrane. It catalyses the reaction alpha-ribazole + adenosylcob(III)inamide-GDP = adenosylcob(III)alamin + GMP + H(+). The catalysed reaction is alpha-ribazole 5'-phosphate + adenosylcob(III)inamide-GDP = adenosylcob(III)alamin 5'-phosphate + GMP + H(+). It participates in cofactor biosynthesis; adenosylcobalamin biosynthesis; adenosylcobalamin from cob(II)yrinate a,c-diamide: step 7/7. Functionally, joins adenosylcobinamide-GDP and alpha-ribazole to generate adenosylcobalamin (Ado-cobalamin). Also synthesizes adenosylcobalamin 5'-phosphate from adenosylcobinamide-GDP and alpha-ribazole 5'-phosphate. The chain is Adenosylcobinamide-GDP ribazoletransferase from Novosphingobium aromaticivorans (strain ATCC 700278 / DSM 12444 / CCUG 56034 / CIP 105152 / NBRC 16084 / F199).